A 198-amino-acid polypeptide reads, in one-letter code: GTP cyclohydrolase-2 (198 aa).

52–56 (RMHSE) lines the GTP pocket. Zn(2+)-binding residues include Cys57, Cys68, and Cys70. Residues Gln73, 94–96 (EGR), and Thr116 each bind GTP. Asp128 acts as the Proton acceptor in catalysis. The active-site Nucleophile is the Arg130. GTP is bound by residues Thr151 and Lys156.

Belongs to the GTP cyclohydrolase II family. Zn(2+) is required as a cofactor.

It catalyses the reaction GTP + 4 H2O = 2,5-diamino-6-hydroxy-4-(5-phosphoribosylamino)-pyrimidine + formate + 2 phosphate + 3 H(+). The protein operates within cofactor biosynthesis; riboflavin biosynthesis; 5-amino-6-(D-ribitylamino)uracil from GTP: step 1/4. In terms of biological role, catalyzes the conversion of GTP to 2,5-diamino-6-ribosylamino-4(3H)-pyrimidinone 5'-phosphate (DARP), formate and pyrophosphate. The polypeptide is GTP cyclohydrolase-2 (Vibrio parahaemolyticus serotype O3:K6 (strain RIMD 2210633)).